The following is a 607-amino-acid chain: ENTH domain-containing protein 1 (607 aa).

Residues 9 to 141 enclose the ENTH domain; the sequence is NFVKNYSDAE…MDEPLLCKER (133 aa). Positions 543–574 form a coiled coil; it reads EAKNSISVLLREVKRAIARLHEDLSTVIQELN.

This chain is ENTH domain-containing protein 1 (ENTHD1), found in Homo sapiens (Human).